We begin with the raw amino-acid sequence, 503 residues long: Activin receptor type-1-like (503 aa).

The N-terminal stretch at 1 to 21 (MTLGSPRKGLLMLLMALVTQG) is a signal peptide. Topologically, residues 22–118 (DPVKPSRGPL…PSEQPGTDGQ (97 aa)) are extracellular. 3 disulfide bridges follow: cysteine 34-cysteine 51, cysteine 36-cysteine 41, and cysteine 46-cysteine 69. The interval 73–76 (HREL) is mediates specificity for BMP ligand. 2 disulfide bridges follow: cysteine 77-cysteine 89 and cysteine 90-cysteine 95. N-linked (GlcNAc...) asparagine glycosylation is present at asparagine 98. A helical transmembrane segment spans residues 119–141 (LALILGPVLALLALVALGVLGLW). Over 142–503 (HVRRRQEKQR…NSPEKPKVIQ (362 aa)) the chain is Cytoplasmic. 3 positions are modified to phosphoserine: serine 155, serine 160, and serine 161. One can recognise a GS domain in the interval 172-201 (SMLGDLLDSDCTTGSGSGLPFLVQRTVARQ). The Protein kinase domain maps to 202–492 (VALVECVGKG…LRIKKTLQKI (291 aa)). ATP-binding positions include 208–216 (VGKGRYGEV) and lysine 229. Catalysis depends on aspartate 330, which acts as the Proton acceptor.

This sequence belongs to the protein kinase superfamily. TKL Ser/Thr protein kinase family. TGFB receptor subfamily. As to quaternary structure, interacts with TSC22D1/TSC-22. The cofactor is Mg(2+). It depends on Mn(2+) as a cofactor.

Its subcellular location is the cell membrane. It carries out the reaction L-threonyl-[receptor-protein] + ATP = O-phospho-L-threonyl-[receptor-protein] + ADP + H(+). The catalysed reaction is L-seryl-[receptor-protein] + ATP = O-phospho-L-seryl-[receptor-protein] + ADP + H(+). Type I receptor for TGF-beta family ligands BMP9/GDF2 and BMP10 and important regulator of normal blood vessel development. On ligand binding, forms a receptor complex consisting of two type II and two type I transmembrane serine/threonine kinases. Type II receptors phosphorylate and activate type I receptors which autophosphorylate, then bind and activate SMAD transcriptional regulators. May bind activin as well. The chain is Activin receptor type-1-like (ACVRL1) from Homo sapiens (Human).